Reading from the N-terminus, the 288-residue chain is Probable chromosome 1-partitioning protein ParB (288 aa).

The protein belongs to the ParB family.

Functionally, involved in chromosome partition. Localize to both poles of the predivisional cell following completion of DNA replication. Binds to the DNA origin of replication. The polypeptide is Probable chromosome 1-partitioning protein ParB (parB1) (Deinococcus radiodurans (strain ATCC 13939 / DSM 20539 / JCM 16871 / CCUG 27074 / LMG 4051 / NBRC 15346 / NCIMB 9279 / VKM B-1422 / R1)).